The sequence spans 83 residues: Cytochrome b559 subunit alpha (83 aa).

Residues 21–35 (VIHSITIPSLFIAGW) traverse the membrane as a helical segment. His-23 lines the heme pocket.

Belongs to the PsbE/PsbF family. Heterodimer of an alpha subunit and a beta subunit. PSII is composed of 1 copy each of membrane proteins PsbA, PsbB, PsbC, PsbD, PsbE, PsbF, PsbH, PsbI, PsbJ, PsbK, PsbL, PsbM, PsbT, PsbX, PsbY, PsbZ, Psb30/Ycf12, at least 3 peripheral proteins of the oxygen-evolving complex and a large number of cofactors. It forms dimeric complexes. It depends on heme b as a cofactor.

Its subcellular location is the plastid. The protein resides in the chloroplast thylakoid membrane. Its function is as follows. This b-type cytochrome is tightly associated with the reaction center of photosystem II (PSII). PSII is a light-driven water:plastoquinone oxidoreductase that uses light energy to abstract electrons from H(2)O, generating O(2) and a proton gradient subsequently used for ATP formation. It consists of a core antenna complex that captures photons, and an electron transfer chain that converts photonic excitation into a charge separation. The protein is Cytochrome b559 subunit alpha of Physcomitrium patens (Spreading-leaved earth moss).